The chain runs to 127 residues: Holo-[acyl-carrier-protein] synthase (127 aa).

The Mg(2+) site is built by Asp8 and Glu57.

Belongs to the P-Pant transferase superfamily. AcpS family. Mg(2+) is required as a cofactor.

The protein localises to the cytoplasm. It catalyses the reaction apo-[ACP] + CoA = holo-[ACP] + adenosine 3',5'-bisphosphate + H(+). Functionally, transfers the 4'-phosphopantetheine moiety from coenzyme A to a Ser of acyl-carrier-protein. The chain is Holo-[acyl-carrier-protein] synthase from Vesicomyosocius okutanii subsp. Calyptogena okutanii (strain HA).